The following is a 136-amino-acid chain: ATP synthase epsilon chain (136 aa).

A disordered region spans residues 100 to 120; it reads QGALEEANRGEDKPNQLKASN. Residues 105–114 show a composition bias toward basic and acidic residues; sequence EANRGEDKPN.

Belongs to the ATPase epsilon chain family. F-type ATPases have 2 components, CF(1) - the catalytic core - and CF(0) - the membrane proton channel. CF(1) has five subunits: alpha(3), beta(3), gamma(1), delta(1), epsilon(1). CF(0) has three main subunits: a, b and c.

It is found in the cellular thylakoid membrane. Its function is as follows. Produces ATP from ADP in the presence of a proton gradient across the membrane. This chain is ATP synthase epsilon chain (atpC), found in Synechocystis sp. (strain ATCC 27184 / PCC 6803 / Kazusa).